The primary structure comprises 241 residues: Prolactin-8A8 (241 aa).

The N-terminal stretch at 1–30 (MELQFRQPHFSDALLLLLLSNLLLWEKASS) is a signal peptide. 3 cysteine pairs are disulfide-bonded: C34-C41, C101-C217, and C234-C241. The N-linked (GlcNAc...) asparagine glycan is linked to N213.

It belongs to the somatotropin/prolactin family. As to expression, expressed specifically in the placenta. Predominantly expressed in spongiotrophoblast cells.

Its subcellular location is the secreted. This chain is Prolactin-8A8 (Prl8a8), found in Mus musculus (Mouse).